The sequence spans 585 residues: Arginine--tRNA ligase (585 aa).

The short motif at 131–141 (ANPTGPMHVGH) is the 'HIGH' region element.

It belongs to the class-I aminoacyl-tRNA synthetase family. In terms of assembly, monomer.

The protein localises to the cytoplasm. The catalysed reaction is tRNA(Arg) + L-arginine + ATP = L-arginyl-tRNA(Arg) + AMP + diphosphate. The sequence is that of Arginine--tRNA ligase from Rhizobium etli (strain CIAT 652).